We begin with the raw amino-acid sequence, 69 residues long: DNA-directed RNA polymerase subunit omega (69 aa).

It belongs to the RNA polymerase subunit omega family. As to quaternary structure, the RNAP catalytic core consists of 2 alpha, 1 beta, 1 beta' and 1 omega subunit. When a sigma factor is associated with the core the holoenzyme is formed, which can initiate transcription.

It carries out the reaction RNA(n) + a ribonucleoside 5'-triphosphate = RNA(n+1) + diphosphate. In terms of biological role, promotes RNA polymerase assembly. Latches the N- and C-terminal regions of the beta' subunit thereby facilitating its interaction with the beta and alpha subunits. The protein is DNA-directed RNA polymerase subunit omega of Pediococcus pentosaceus (strain ATCC 25745 / CCUG 21536 / LMG 10740 / 183-1w).